The sequence spans 155 residues: Transcription antitermination protein NusB (155 aa).

This sequence belongs to the NusB family.

In terms of biological role, involved in transcription antitermination. Required for transcription of ribosomal RNA (rRNA) genes. Binds specifically to the boxA antiterminator sequence of the ribosomal RNA (rrn) operons. The chain is Transcription antitermination protein NusB from Ralstonia nicotianae (strain ATCC BAA-1114 / GMI1000) (Ralstonia solanacearum).